Here is a 269-residue protein sequence, read N- to C-terminus: Flagellar brake protein YcgR (269 aa).

Residues Q134–T254 enclose the PilZ domain.

This sequence belongs to the YcgR family. Monomer. Interacts with the flagellar basal bodies.

It is found in the bacterial flagellum basal body. Its function is as follows. Acts as a flagellar brake, regulating swimming and swarming in a bis-(3'-5') cyclic diguanylic acid (c-di-GMP)-dependent manner. Binds 1 c-di-GMP dimer per subunit. Increasing levels of c-di-GMP lead to decreased motility. This is Flagellar brake protein YcgR from Nitrosomonas eutropha (strain DSM 101675 / C91 / Nm57).